A 202-amino-acid polypeptide reads, in one-letter code: Large ribosomal subunit protein uL4 (202 aa).

Positions K47–R67 are disordered.

The protein belongs to the universal ribosomal protein uL4 family. Part of the 50S ribosomal subunit.

Its function is as follows. One of the primary rRNA binding proteins, this protein initially binds near the 5'-end of the 23S rRNA. It is important during the early stages of 50S assembly. It makes multiple contacts with different domains of the 23S rRNA in the assembled 50S subunit and ribosome. Functionally, forms part of the polypeptide exit tunnel. The sequence is that of Large ribosomal subunit protein uL4 from Dichelobacter nodosus (strain VCS1703A).